Reading from the N-terminus, the 334-residue chain is Serine racemase (334 aa).

Glu13 contributes to the Mg(2+) binding site. ATP contacts are provided by Ser31, Ser32, Ile33, Lys51, and Thr52. Active-site proton acceptor residues include Lys56 and Ser84. Lys56 is modified (N6-(pyridoxal phosphate)lysine). Position 86 (Asn86) interacts with pyridoxal 5'-phosphate. Gln89 lines the ATP pocket. Cys113 carries the S-nitrosocysteine modification. Tyr121 is a binding site for ATP. Residue Asn154 coordinates pyridoxal 5'-phosphate. Residue Asp178 coordinates Mg(2+). Residues Gly185, Gly186, Gly187, Gly188, and Met189 each coordinate pyridoxal 5'-phosphate. Mg(2+) contacts are provided by Glu210, Ala214, Asp216, and Asn247. Residues Glu210, Ala214, Asp216, and Asn247 each contribute to the Ca(2+) site. Mn(2+)-binding residues include Glu210, Ala214, and Asp216. Lys279 contacts ATP. Position 313 (Ser313) interacts with pyridoxal 5'-phosphate. Position 316 (Asn316) interacts with ATP.

The protein belongs to the serine/threonine dehydratase family. Homodimer. Mg(2+) serves as cofactor. Mn(2+) is required as a cofactor. It depends on Ca(2+) as a cofactor. Requires pyridoxal 5'-phosphate as cofactor. S-nitrosylated, leading to decrease the enzyme activity.

The enzyme catalyses L-serine = D-serine. It catalyses the reaction L-serine = pyruvate + NH4(+). The catalysed reaction is D-serine = pyruvate + NH4(+). Functionally, catalyzes the synthesis of D-serine from L-serine. D-serine is a key coagonist with glutamate at NMDA receptors. Has dehydratase activity towards both L-serine and D-serine. The polypeptide is Serine racemase (SRR) (Bos taurus (Bovine)).